The following is a 355-amino-acid chain: NAD-dependent protein deacylase sirtuin-6 (355 aa).

The residue at position 2 (S2) is an N-acetylserine. S10 carries the post-translational modification Phosphoserine. One can recognise a Deacetylase sirtuin-type domain in the interval P27–E272. At K33 the chain carries N6-acetyllysine. NAD(+) is bound by residues A53, T57, F64, R65, W71, Q113, and H133. The Proton acceptor role is filled by H133. Zn(2+) contacts are provided by C141, C144, and C166. K170 participates in a covalent cross-link: Glycyl lysine isopeptide (Lys-Gly) (interchain with G-Cter in ubiquitin). C177 lines the Zn(2+) pocket. Positions 214, 216, 240, 242, and 258 each coordinate NAD(+). The segment at K284 to S355 is disordered. A compositionally biased stretch (pro residues) spans P287 to K296. Residue T294 is modified to Phosphothreonine. Phosphoserine is present on residues S303 and S330.

The protein belongs to the sirtuin family. Class IV subfamily. As to quaternary structure, homodimer; binds to nucleosomes and DNA ends as a homodimer. Interacts with RELA; interferes with RELA binding to target DNA. Interacts with SMARCA5; promoting recruitment of SMARCA5/SNF2H to double-strand breaks (DSBs) sites. Interacts with the mTORC2 complex; preventing the ability of SIRT6 to deacetylate FOXO1. Interacts with the CLOCK-BMAL1 complex; recruited by the CLOCK-BMAL1 complex to regulate expression of clock-controlled genes. Interacts with CSNK2A2; preventing CSNK2A2 localization to the nucleus. In terms of processing, acetylated at Lys-33. Deacetylation at Lys-33 by SIRT1 promotes homomultimerization and binding to double-strand breaks (DSBs) sites. Phosphorylation at Ser-10 by MAPK8/JNK1 in response to oxidative stress stimulates the mono-ADP-ribosyltransferase activity on PARP1, leading to PARP1 recruitment to double-strand breaks (DSBs). Post-translationally, monoubiquitinated at Lys-170 by STUB1/CHIP, preventing its degradation by the proteasome. In terms of processing, sumoylated, leading to specifically decrease ability to deacetylate histone H3 at 'Lys-56' (H3K56ac).

The protein resides in the nucleus. The protein localises to the chromosome. Its subcellular location is the telomere. It is found in the endoplasmic reticulum. The enzyme catalyses N(6)-acetyl-L-lysyl-[protein] + NAD(+) + H2O = 2''-O-acetyl-ADP-D-ribose + nicotinamide + L-lysyl-[protein]. The catalysed reaction is N(6)-tetradecanoyl-L-lysyl-[protein] + NAD(+) + H2O = 2''-O-tetradecanoyl-ADP-D-ribose + nicotinamide + L-lysyl-[protein]. It catalyses the reaction N(6)-hexadecanoyl-L-lysyl-[protein] + NAD(+) + H2O = 2''-O-hexadecanoyl-ADP-D-ribose + nicotinamide + L-lysyl-[protein]. It carries out the reaction L-lysyl-[protein] + NAD(+) = N(6)-(ADP-D-ribosyl)-L-lysyl-[protein] + nicotinamide + H(+). The enzyme catalyses L-arginyl-[protein] + NAD(+) = N(omega)-(ADP-D-ribosyl)-L-arginyl-[protein] + nicotinamide + H(+). Its activity is regulated as follows. Compared to the defatty-acylase activity, the protein deacetylase activity is weak in vitro, and requires activation. The histone deacetylase activity is strongly activated upon binding to nucleosomes and chromatin in vivo. Two molecules of SIRT6 associate with the acidic patch of one nucleosome, while the C-terminal disordered region of SIRT6 associates with nucleosomal DNA, leading to efficient histone deacetylation. The protein-lysine deacetylase activity is also activated by long-chain free fatty-acids. In terms of biological role, NAD-dependent protein deacetylase, deacylase and mono-ADP-ribosyltransferase that plays an essential role in DNA damage repair, telomere maintenance, metabolic homeostasis, inflammation, tumorigenesis and aging. Displays protein-lysine deacetylase or defatty-acylase (demyristoylase and depalmitoylase) activity, depending on the context. Acts as a key histone deacetylase by catalyzing deacetylation of histone H3 at 'Lys-9', 'Lys-18' and 'Lys-56' (H3K9ac, H3K18ac and H3K56ac, respectively), suppressing target gene expression of several transcription factors, including NF-kappa-B. Acts as an inhibitor of transcription elongation by mediating deacetylation of H3K9ac and H3K56ac, preventing release of NELFE from chromatin and causing transcriptional pausing. Involved in DNA repair by promoting double-strand break (DSB) repair: acts as a DSB sensor by recognizing and binding DSB sites, leading to (1) recruitment of DNA repair proteins, such as SMARCA5/SNF2H, and (2) deacetylation of histone H3K9ac and H3K56ac. SIRT6 participation to DSB repair is probably involved in extension of life span. Also promotes DNA repair by deacetylating non-histone proteins, such as DDB2 and p53/TP53. Specifically deacetylates H3K18ac at pericentric heterochromatin, thereby maintaining pericentric heterochromatin silencing at centromeres and protecting against genomic instability and cellular senescence. Involved in telomere maintenance by catalyzing deacetylation of histone H3 in telomeric chromatin, regulating telomere position effect and telomere movement in response to DNA damage. Required for embryonic stem cell differentiation by mediating histone deacetylation of H3K9ac. Plays a major role in metabolism by regulating processes such as glycolysis, gluconeogenesis, insulin secretion and lipid metabolism. Inhibits glycolysis via histone deacetylase activity and by acting as a corepressor of the transcription factor HIF1A, thereby controlling the expression of multiple glycolytic genes. Has tumor suppressor activity by repressing glycolysis, thereby inhibiting the Warburg effect. Also regulates glycolysis and tumorigenesis by mediating deacetylation and nuclear export of non-histone proteins, such as isoform M2 of PKM (PKM2). Acts as a negative regulator of gluconeogenesis by mediating deacetylation of non-histone proteins, such as FOXO1 and KAT2A/GCN5. Promotes beta-oxidation of fatty acids during fasting by catalyzing deacetylation of NCOA2, inducing coactivation of PPARA. Acts as a regulator of lipid catabolism in brown adipocytes, both by catalyzing deacetylation of histones and non-histone proteins, such as FOXO1. Also acts as a regulator of circadian rhythms, both by regulating expression of clock-controlled genes involved in lipid and carbohydrate metabolism, and by catalyzing deacetylation of PER2. The defatty-acylase activity is specifically involved in regulation of protein secretion. Has high activity toward long-chain fatty acyl groups and mediates protein-lysine demyristoylation and depalmitoylation of target proteins, such as RRAS2 and TNF, thereby regulating their secretion. Also acts as a mono-ADP-ribosyltransferase by mediating mono-ADP-ribosylation of PARP1, TRIM28/KAP1 or SMARCC2/BAF170. Mono-ADP-ribosyltransferase activity is involved in DNA repair, cellular senescence, repression of LINE-1 retrotransposon elements and regulation of transcription. In Castor canadensis (American beaver), this protein is NAD-dependent protein deacylase sirtuin-6.